The sequence spans 135 residues: CDGSH iron-sulfur domain-containing protein 2B (135 aa).

Topologically, residues 1-37 (MMLESLARVFKVQLPAYLKRLPIPDSIAGFIRLTVLE) are lumenal. The helical transmembrane segment at 38–60 (WLRLLPFLGVLALLGYLAIRPFL) threads the bilayer. Topologically, residues 61-135 (PKKKQQKDSL…GPLILKKKEV (75 aa)) are cytoplasmic. Positions 99, 101, 110, and 114 each coordinate [2Fe-2S] cluster.

This sequence belongs to the CISD protein family. CISD2 subfamily. Homodimer. Requires [2Fe-2S] cluster as cofactor.

The protein localises to the endoplasmic reticulum membrane. It is found in the mitochondrion outer membrane. In terms of biological role, regulator of autophagy that contributes to antagonize becn1-mediated cellular autophagy at the endoplasmic reticulum. Participates in the interaction of bcl2 with becn1 and is required for bcl2-mediated depression of endoplasmic reticulum Ca(2+) stores during autophagy. The chain is CDGSH iron-sulfur domain-containing protein 2B (cisd2-b) from Xenopus laevis (African clawed frog).